A 185-amino-acid polypeptide reads, in one-letter code: Ribosome-recycling factor (185 aa).

The segment at 137 to 166 (DGLKKAEKDGDIGQDESRGQSEKVQKMTDD) is disordered.

The protein belongs to the RRF family.

The protein resides in the cytoplasm. Functionally, responsible for the release of ribosomes from messenger RNA at the termination of protein biosynthesis. May increase the efficiency of translation by recycling ribosomes from one round of translation to another. In Agrobacterium fabrum (strain C58 / ATCC 33970) (Agrobacterium tumefaciens (strain C58)), this protein is Ribosome-recycling factor.